We begin with the raw amino-acid sequence, 255 residues long: Pimeloyl-[acyl-carrier protein] methyl ester esterase (255 aa).

Substrate-binding positions include Trp-18, 78–79 (SL), and 139–143 (FLALD). Ser-78 (nucleophile) is an active-site residue. Residues Asp-203 and His-233 contribute to the active site. His-233 serves as a coordination point for substrate.

Belongs to the AB hydrolase superfamily. Carboxylesterase BioH family. Monomer.

The protein resides in the cytoplasm. The enzyme catalyses 6-carboxyhexanoyl-[ACP] methyl ester + H2O = 6-carboxyhexanoyl-[ACP] + methanol + H(+). It functions in the pathway cofactor biosynthesis; biotin biosynthesis. The physiological role of BioH is to remove the methyl group introduced by BioC when the pimeloyl moiety is complete. It allows to synthesize pimeloyl-ACP via the fatty acid synthetic pathway through the hydrolysis of the ester bonds of pimeloyl-ACP esters. This Xylella fastidiosa (strain M23) protein is Pimeloyl-[acyl-carrier protein] methyl ester esterase.